A 240-amino-acid chain; its full sequence is Phosducin-like protein 3 (240 aa).

Met1 carries the N-acetylmethionine modification. The Phosducin domain maps to 27–181 (KELEEEEAEK…EGDIKAQFIG (155 aa)). Ser44, Ser65, Ser235, and Ser237 each carry phosphoserine. Positions 92 to 240 (FGEVLEISGK…MRRDSDSEDD (149 aa)) are thioredoxin fold.

The protein belongs to the phosducin family. As to quaternary structure, interacts (via thioredoxin fold region) with KDR/VEGFR2 (via juxtamembrane domain). Forms ternary complexes with the chaperonin CCT complex and actin substrate, leading to inhibition of actin folding. Interacts with XIAP (via BIR 3 and RING domain). Interacts with HSP90AA1 and HSP90AB1. In terms of processing, N-terminal methionine acetylation destabilizes the protein. Expressed in blood vessels (at protein level).

The protein localises to the cytoplasm. It is found in the perinuclear region. The protein resides in the endoplasmic reticulum. Functionally, acts as a chaperone for the angiogenic VEGF receptor KDR/VEGFR2, increasing its abundance by inhibiting its ubiquitination and degradation. Inhibits the folding activity of the chaperonin-containing T-complex (CCT) which leads to inhibition of cytoskeletal actin folding. Acts as a chaperone during heat shock alongside HSP90 and HSP40/70 chaperone complexes. Modulates the activation of caspases during apoptosis. The polypeptide is Phosducin-like protein 3 (Pdcl3) (Mus musculus (Mouse)).